The primary structure comprises 609 residues: Zinc metalloproteinase-disintegrin-like (609 aa).

The signal sequence occupies residues Met-1 to Ser-20. A propeptide spanning residues Ile-21–Ala-189 is cleaved from the precursor. Residues Arg-198–Pro-393 form the Peptidase M12B domain. 2 residues coordinate Ca(2+): Glu-201 and Asp-285. Cystine bridges form between Cys-308–Cys-388, Cys-348–Cys-372, and Cys-350–Cys-355. His-333 contributes to the Zn(2+) binding site. Glu-334 is a catalytic residue. Residues His-337 and His-343 each coordinate Zn(2+). Asn-371 carries an N-linked (GlcNAc...) asparagine glycan. Ca(2+) contacts are provided by Cys-388, Asn-391, Val-403, Asn-406, Leu-408, Glu-410, Glu-413, and Asp-416. The Disintegrin domain occupies Pro-401 to Asn-487. 14 disulfide bridges follow: Cys-404/Cys-433, Cys-415/Cys-428, Cys-417/Cys-423, Cys-427/Cys-450, Cys-441/Cys-447, Cys-446/Cys-472, Cys-459/Cys-479, Cys-466/Cys-498, Cys-491/Cys-503, Cys-510/Cys-560, Cys-525/Cys-571, Cys-538/Cys-548, Cys-555/Cys-597, and Cys-591/Cys-602. The D/ECD-tripeptide motif lies at Glu-465–Asp-467. 5 residues coordinate Ca(2+): Asp-467, Pro-468, Glu-470, Asp-482, and Val-483.

Belongs to the venom metalloproteinase (M12B) family. P-III subfamily. P-IIIa sub-subfamily. In terms of assembly, monomer. The cofactor is Zn(2+). In terms of tissue distribution, expressed by the venom gland.

It localises to the secreted. This protein is a zinc metalloprotease from snake venom that possesses hemorrhagic activity. The protein is Zinc metalloproteinase-disintegrin-like of Crotalus durissus durissus (Central American rattlesnake).